The chain runs to 309 residues: ATP synthase gamma chain (309 aa).

It belongs to the ATPase gamma chain family. F-type ATPases have 2 components, CF(1) - the catalytic core - and CF(0) - the membrane proton channel. CF(1) has five subunits: alpha(3), beta(3), gamma(1), delta(1), epsilon(1). CF(0) has three main subunits: a, b and c.

Its subcellular location is the cell membrane. Its function is as follows. Produces ATP from ADP in the presence of a proton gradient across the membrane. The gamma chain is believed to be important in regulating ATPase activity and the flow of protons through the CF(0) complex. The polypeptide is ATP synthase gamma chain (Mycolicibacterium vanbaalenii (strain DSM 7251 / JCM 13017 / BCRC 16820 / KCTC 9966 / NRRL B-24157 / PYR-1) (Mycobacterium vanbaalenii)).